A 100-amino-acid polypeptide reads, in one-letter code: Toxin ParE3 (100 aa).

It belongs to the RelE toxin family.

Functionally, toxic component of a type II toxin-antitoxin (TA) system. Its toxic effect is neutralized by coexpression with cognate antitoxin ParD3 but no other ParD or RelB antitoxin. In Caulobacter vibrioides (strain ATCC 19089 / CIP 103742 / CB 15) (Caulobacter crescentus), this protein is Toxin ParE3 (parE3).